A 320-amino-acid chain; its full sequence is Cytochrome f (320 aa).

An N-terminal signal peptide occupies residues 1 to 35 (MQTRKTLSWIKEEITRSISLSLMLSIITHASLSNA). Heme is bound by residues Tyr36, Cys56, Cys59, and His60. A helical transmembrane segment spans residues 286–306 (VQGLLFFLTSVLLAQIFLVLK).

This sequence belongs to the cytochrome f family. In terms of assembly, the 4 large subunits of the cytochrome b6-f complex are cytochrome b6, subunit IV (17 kDa polypeptide, petD), cytochrome f and the Rieske protein, while the 4 small subunits are PetG, PetL, PetM and PetN. The complex functions as a dimer. The cofactor is heme.

It is found in the plastid. The protein resides in the chloroplast thylakoid membrane. In terms of biological role, component of the cytochrome b6-f complex, which mediates electron transfer between photosystem II (PSII) and photosystem I (PSI), cyclic electron flow around PSI, and state transitions. The protein is Cytochrome f of Pelargonium hortorum (Common geranium).